Consider the following 227-residue polypeptide: MGGTASTRRVTFEADENENITVVKGIRLSENVIDRMKETSPSGPKSQRYSGTYGASVSDEELKRRVAEELALEQAKKESENQKRLKQSKELDAEKAFANEQLTRAILRERISNEEERAKAKHLAKQLEEKDRVIKKQDAFYKEQLARLEERSSEFYKVTTEQYQKAAEEVEAKFKRYEYHPVCADLQAQILQCYRQNTQQTLSCSALASQYMRCVNQAKQSTLEKGG.

Gly-2 is lipidated: N-myristoyl glycine. Ser-29 carries the phosphoserine modification. A disordered region spans residues 34-60 (DRMKETSPSGPKSQRYSGTYGASVSDE). Polar residues predominate over residues 39 to 55 (TSPSGPKSQRYSGTYGA). Phosphotyrosine is present on Tyr-49. 3 positions are modified to phosphoserine: Ser-50, Ser-56, and Ser-58. Lys-142 is subject to N6-acetyllysine. The CHCH domain maps to 180 to 222 (HPVCADLQAQILQCYRQNTQQTLSCSALASQYMRCVNQAKQST). 2 consecutive short sequence motifs (cx9C motif) follow at residues 183–193 (CADLQAQILQC) and 204–214 (CSALASQYMRC). 2 cysteine pairs are disulfide-bonded: Cys-183–Cys-214 and Cys-193–Cys-204.

It belongs to the MICOS complex subunit Mic19 family. Metazoan Mic19 subfamily. As to quaternary structure, component of the mitochondrial contact site and cristae organizing system (MICOS) complex, composed of at least MICOS10/MIC10, CHCHD3/MIC19, CHCHD6/MIC25, APOOL/MIC27, IMMT/MIC60, APOO/MIC23/MIC26 and MICOS13/MIC13. This complex was also known under the names MINOS or MitOS complex. The MICOS complex associates with mitochondrial outer membrane proteins SAMM50, MTX1 and MTX2 (together described as components of the mitochondrial outer membrane sorting assembly machinery (SAM) complex) and DNAJC11, mitochondrial inner membrane protein TMEM11 and with HSPA9. The MICOS and SAM complexes together with DNAJC11 are part of a large protein complex spanning both membranes termed the mitochondrial intermembrane space bridging (MIB) complex. Interacts with HSPA1A/HSPA1B and OPA1, preferentially with the soluble OPA1 form. Interacts with IMMT/MIC60.

It localises to the mitochondrion inner membrane. The protein localises to the cytoplasm. The protein resides in the nucleus. Its subcellular location is the mitochondrion. Component of the MICOS complex, a large protein complex of the mitochondrial inner membrane that plays crucial roles in the maintenance of crista junctions, inner membrane architecture, and formation of contact sites to the outer membrane. Has also been shown to function as a transcription factor which binds to the BAG1 promoter and represses BAG1 transcription. Plays an important role in the maintenance of the MICOS complex stability and the mitochondrial cristae morphology. This Bos taurus (Bovine) protein is MICOS complex subunit MIC19 (CHCHD3).